The following is a 1030-amino-acid chain: ADAMTS-like protein 4 (1030 aa).

The signal sequence occupies residues Met1 to Asp24. Positions Gly47–Pro91 constitute a TSP type-1 1 domain. Disordered regions lie at residues His73–Met150 and Leu168–Thr306. 3 stretches are compositionally biased toward polar residues: residues Lys176–Pro186, Gln211–Pro237, and Pro245–Gly257. 2 N-linked (GlcNAc...) asparagine glycosylation sites follow: Asn451 and Asn731. TSP type-1 domains are found at residues Cys681 to Leu740, Cys741 to Thr800, Trp803 to Glu865, Lys866 to Ala925, and Cys926 to Asn982. The PLAC domain occupies Pro985–Leu1022.

As to quaternary structure, interacts with CTSB. Interacts with FBN1. Glycosylated. Can be O-fucosylated by POFUT2 on a serine or a threonine residue found within the consensus sequence C1-X(2)-(S/T)-C2-G of the TSP type-1 repeat domains where C1 and C2 are the first and second cysteine residue of the repeat, respectively. Fucosylated repeats can then be further glycosylated by the addition of a beta-1,3-glucose residue by the glucosyltransferase, B3GALTL. Fucosylation mediates the efficient secretion of ADAMTS family members. Can also be C-glycosylated with one or two mannose molecules on tryptophan residues within the consensus sequence W-X-X-W of the TPRs, and N-glycosylated. These other glycosylations can also facilitate secretion.

The protein resides in the secreted. It localises to the extracellular space. The protein localises to the extracellular matrix. In terms of biological role, positive regulation of apoptosis. May facilitate FBN1 microfibril biogenesis. This chain is ADAMTS-like protein 4, found in Rattus norvegicus (Rat).